Consider the following 236-residue polypeptide: Syntaxin-8 (236 aa).

At 1–215 (MAPDPWFSTY…MVDRKSASCG (215 aa)) the chain is on the cytoplasmic side. Residues 42 to 65 (VTIRALLQNLKEKIALLKDLLLRA) adopt a coiled-coil conformation. A t-SNARE coiled-coil homology domain is found at 145–207 (QKIIQEQDAG…RNETRRVNMV (63 aa)). Serine 160 is subject to Phosphoserine. A helical; Anchor for type IV membrane protein transmembrane segment spans residues 216–232 (MIMVILLLLVAIVVVAV). Topologically, residues 233 to 236 (WPTN) are vesicular.

It belongs to the syntaxin family. In terms of assembly, forms a SNARE complex with STX7, VTI1B and VAMP8 which functions in the homotypic fusion of late endosomes. Part of the SNARE core complex containing STX7, VAMP8 and VTI1B. Interacts with VAMP8. Interacts with HECTD3. Interacts with TPC1. Post-translationally, ubiquitinated by HECTD3. As to expression, highly expressed in heart. Also found in brain, kidney, liver, lung, placenta, skeletal muscle, spleen and pancreas.

The protein resides in the membrane. Functionally, vesicle trafficking protein that functions in the early secretory pathway, possibly by mediating retrograde transport from cis-Golgi membranes to the ER. The sequence is that of Syntaxin-8 (STX8) from Homo sapiens (Human).